Here is a 244-residue protein sequence, read N- to C-terminus: 6-carboxyhexanoate--CoA ligase (244 aa).

Belongs to the BioW family. As to quaternary structure, homodimer. The cofactor is Mg(2+).

The catalysed reaction is heptanedioate + ATP + CoA = 6-carboxyhexanoyl-CoA + AMP + diphosphate. The protein operates within metabolic intermediate metabolism; pimeloyl-CoA biosynthesis; pimeloyl-CoA from pimelate: step 1/1. Functionally, catalyzes the transformation of pimelate into pimeloyl-CoA with concomitant hydrolysis of ATP to AMP. This Methanococcus maripaludis (strain C6 / ATCC BAA-1332) protein is 6-carboxyhexanoate--CoA ligase.